The primary structure comprises 868 residues: Rifampicin phosphotransferase (868 aa).

Residues 1-313 (MSSFVLDFQE…IYIVQSRPIT (313 aa)) form an ATP-binding region. ATP is bound by residues Lys22, Arg116, Gly131, Thr135, Gln182, Glu296, Gln308, and Arg310. Residues 326 to 756 (NHVYISVGHQ…TSDGEIITGK (431 aa)) are rifampicin-binding. The segment at 769 to 867 (GLPVSSGVVE…VHGTEGYIEV (99 aa)) is swivel phosphohistidine. His827 (tele-phosphohistidine intermediate) is an active-site residue.

The protein belongs to the rifampicin phosphotransferase family.

It catalyses the reaction rifampicin + ATP + H2O = 21-phosphorifampicin + AMP + phosphate + 2 H(+). Catalyzes the phosphorylation of rifampicin, also known as rifampin (RIF), leading to its inactivation. Confers high level resistance to a variety of clinically used rifamycin antibiotics. Does not show phosphoenolpyruvate (PEP) synthase activity. The sequence is that of Rifampicin phosphotransferase from Bacillus cereus (strain ATCC 14579 / DSM 31 / CCUG 7414 / JCM 2152 / NBRC 15305 / NCIMB 9373 / NCTC 2599 / NRRL B-3711).